Reading from the N-terminus, the 486-residue chain is MTAPLPGMEEIEDPAVVREEMISAFEDASKDLASNTSYYDAERRPEAIGVTVPREMQQLLAHVGYPRLYVDSVAERQAVEGFRLGDADEADEELWQWWQANNLDIEAPLGYTDAYVHGRSFITISKPDPQLDLGWDQNVPIIRVEPPTRMHAEIDPRINRVSKAIRVAYDKEGNEIQAATLYTPMETIGWFRADGEWAEWFNVPHGLGVVPVVPLPNRTRLSDLYGTSEITPELRSMTDAAARILMLMQATAELMGVPQRLIFGIKPEEIGVDSETGQTLFDAYLARILAFEDAEGKIQQFSAAELANFTNALDQIAKQVAAYTGLPPQYLSTAADNPASAEAIRAAESRLIKKVERKNLMFGGAWEEAMRIAYRIMKGGDVPPDMLRMETVWRDPSTPTYAAKADAATKLYGNGQGVIPRERARIDMGYSVKEREEMRRWDEEEAAMGLGLLGTMVDADPTVPGSPSPTAPPKPQPAIESSGGDA.

The tract at residues 456-486 (MVDADPTVPGSPSPTAPPKPQPAIESSGGDA) is disordered. Positions 464–476 (PGSPSPTAPPKPQ) are enriched in pro residues.

Belongs to the SPP1-like portal protein family. Homododecamer.

It localises to the virion. Its function is as follows. Forms the portal vertex of the capsid. This portal plays critical roles in head assembly, genome packaging, neck/tail attachment, and genome ejection. The portal protein multimerizes as a single ring-shaped homododecamer arranged around a central channel. Binds to the terminase subunits to form the packaging machine. This is Portal protein (14) from Mycobacterium phage L5 (Mycobacteriophage L5).